Reading from the N-terminus, the 207-residue chain is MSLLIEQARYHLSAHNARQLPDDGGYEVAFAGRSNAGKSSALNALTRQNSLARVSKTPGRTQQLVFFQIQPERYLVDLPGYGYAKVPQDLQAHWQAFIDRYFRTREALRGLVVVMDIRHPLKDYDLQMLGYAAERGLPAHGLLTKADKLGRGQQMQTLQKVKKEVSSRFGDSVTVQTYSGESRQGVDELRGIVGGWLGLDVEPPADA.

One can recognise an EngB-type G domain in the interval 24–199 (GGYEVAFAGR…RGIVGGWLGL (176 aa)). Residues 32-39 (GRSNAGKS), 59-63 (GRTQQ), 77-80 (DLPG), 144-147 (TKAD), and 178-180 (YSG) contribute to the GTP site. 2 residues coordinate Mg(2+): serine 39 and threonine 61.

The protein belongs to the TRAFAC class TrmE-Era-EngA-EngB-Septin-like GTPase superfamily. EngB GTPase family. It depends on Mg(2+) as a cofactor.

In terms of biological role, necessary for normal cell division and for the maintenance of normal septation. The protein is Probable GTP-binding protein EngB of Xanthomonas campestris pv. campestris (strain 8004).